The following is a 419-amino-acid chain: Glutamyl-tRNA reductase (419 aa).

Substrate contacts are provided by residues 49 to 52, S107, 112 to 114, and Q118; these read TCNR and EPQ. C50 acts as the Nucleophile in catalysis. 187–192 is a binding site for NADP(+); that stretch reads GAGETI.

The protein belongs to the glutamyl-tRNA reductase family. Homodimer.

It carries out the reaction (S)-4-amino-5-oxopentanoate + tRNA(Glu) + NADP(+) = L-glutamyl-tRNA(Glu) + NADPH + H(+). The protein operates within porphyrin-containing compound metabolism; protoporphyrin-IX biosynthesis; 5-aminolevulinate from L-glutamyl-tRNA(Glu): step 1/2. Its function is as follows. Catalyzes the NADPH-dependent reduction of glutamyl-tRNA(Glu) to glutamate 1-semialdehyde (GSA). This is Glutamyl-tRNA reductase from Vibrio cholerae serotype O1 (strain ATCC 39541 / Classical Ogawa 395 / O395).